Here is a 94-residue protein sequence, read N- to C-terminus: Long neurotoxin LNTX8 (94 aa).

Residues 1-21 form the signal peptide; sequence MKTLLLTLVVVTIMCLDLGYT. 5 cysteine pairs are disulfide-bonded: C24–C43, C36–C64, C49–C53, C68–C79, and C80–C85.

It belongs to the three-finger toxin family. Long-chain subfamily. Type II alpha-neurotoxin sub-subfamily. As to expression, expressed by the venom gland.

The protein resides in the secreted. In terms of biological role, binds with high affinity to muscular (alpha-1/CHRNA1) and neuronal (alpha-7/CHRNA7) nicotinic acetylcholine receptor (nAChR) and inhibits acetylcholine from binding to the receptor, thereby impairing neuromuscular and neuronal transmission. In Ophiophagus hannah (King cobra), this protein is Long neurotoxin LNTX8.